Here is a 259-residue protein sequence, read N- to C-terminus: Thiazole synthase (259 aa).

Catalysis depends on Lys100, which acts as the Schiff-base intermediate with DXP. 1-deoxy-D-xylulose 5-phosphate contacts are provided by residues Gly161, 187–188, and 209–210; these read AG and NT.

Belongs to the ThiG family. Homotetramer. Forms heterodimers with either ThiH or ThiS.

It is found in the cytoplasm. It catalyses the reaction [ThiS sulfur-carrier protein]-C-terminal-Gly-aminoethanethioate + 2-iminoacetate + 1-deoxy-D-xylulose 5-phosphate = [ThiS sulfur-carrier protein]-C-terminal Gly-Gly + 2-[(2R,5Z)-2-carboxy-4-methylthiazol-5(2H)-ylidene]ethyl phosphate + 2 H2O + H(+). It participates in cofactor biosynthesis; thiamine diphosphate biosynthesis. Catalyzes the rearrangement of 1-deoxy-D-xylulose 5-phosphate (DXP) to produce the thiazole phosphate moiety of thiamine. Sulfur is provided by the thiocarboxylate moiety of the carrier protein ThiS. In vitro, sulfur can be provided by H(2)S. The protein is Thiazole synthase of Halalkalibacterium halodurans (strain ATCC BAA-125 / DSM 18197 / FERM 7344 / JCM 9153 / C-125) (Bacillus halodurans).